The chain runs to 486 residues: UDP-N-acetylmuramate--L-alanine ligase (486 aa).

126-132 (GTHGKTT) contacts ATP.

This sequence belongs to the MurCDEF family.

It localises to the cytoplasm. The catalysed reaction is UDP-N-acetyl-alpha-D-muramate + L-alanine + ATP = UDP-N-acetyl-alpha-D-muramoyl-L-alanine + ADP + phosphate + H(+). It functions in the pathway cell wall biogenesis; peptidoglycan biosynthesis. Cell wall formation. The chain is UDP-N-acetylmuramate--L-alanine ligase from Pectobacterium carotovorum subsp. carotovorum (strain PC1).